A 230-amino-acid chain; its full sequence is 2-C-methyl-D-erythritol 4-phosphate cytidylyltransferase (230 aa).

This sequence belongs to the IspD/TarI cytidylyltransferase family. IspD subfamily.

It carries out the reaction 2-C-methyl-D-erythritol 4-phosphate + CTP + H(+) = 4-CDP-2-C-methyl-D-erythritol + diphosphate. The protein operates within isoprenoid biosynthesis; isopentenyl diphosphate biosynthesis via DXP pathway; isopentenyl diphosphate from 1-deoxy-D-xylulose 5-phosphate: step 2/6. Its function is as follows. Catalyzes the formation of 4-diphosphocytidyl-2-C-methyl-D-erythritol from CTP and 2-C-methyl-D-erythritol 4-phosphate (MEP). The protein is 2-C-methyl-D-erythritol 4-phosphate cytidylyltransferase of Synechocystis sp. (strain ATCC 27184 / PCC 6803 / Kazusa).